Here is a 417-residue protein sequence, read N- to C-terminus: Magnesium-protoporphyrin IX monomethyl ester [oxidative] cyclase, chloroplastic (417 aa).

Residues 1–45 constitute a chloroplast transit peptide; the sequence is MASAMELSLLNPAMHHYGIAAKTASHLPVVPARRASSGAVRFRVR.

Belongs to the AcsF family. The cofactor is Fe cation.

It is found in the plastid. It localises to the chloroplast membrane. It catalyses the reaction Mg-protoporphyrin IX 13-monomethyl ester + 3 NADPH + 3 O2 + 2 H(+) = 3,8-divinyl protochlorophyllide a + 3 NADP(+) + 5 H2O. It functions in the pathway porphyrin-containing compound metabolism; chlorophyll biosynthesis. Its function is as follows. Catalyzes the formation of the isocyclic ring in chlorophyll biosynthesis. Mediates the cyclase reaction, which results in the formation of divinylprotochlorophyllide (Pchlide) characteristic of all chlorophylls from magnesium-protoporphyrin IX 13-monomethyl ester (MgPMME). This is Magnesium-protoporphyrin IX monomethyl ester [oxidative] cyclase, chloroplastic (CRD1) from Hordeum vulgare (Barley).